A 247-amino-acid chain; its full sequence is Segregation and condensation protein A (247 aa).

The protein belongs to the ScpA family. In terms of assembly, component of a cohesin-like complex composed of ScpA, ScpB and the Smc homodimer, in which ScpA and ScpB bind to the head domain of Smc. The presence of the three proteins is required for the association of the complex with DNA.

The protein resides in the cytoplasm. Functionally, participates in chromosomal partition during cell division. May act via the formation of a condensin-like complex containing Smc and ScpB that pull DNA away from mid-cell into both cell halves. The chain is Segregation and condensation protein A from Mycoplasma mobile (strain ATCC 43663 / 163K / NCTC 11711) (Mesomycoplasma mobile).